We begin with the raw amino-acid sequence, 346 residues long: MQTLNTLDLQTTSLKIVDGKLWILDQQTLPQRQEWLSADTVELLIEHIQALRVRGAPLIGLSASLLLALLAERGLPQAQLEQALIALRESRPTAVNLMNNLARMQQALLHANWVAAMTHEALRLVEEDRELCERIAQHGVQLVKPDSNLLTHCNTGGLATAGIGTAIGVLLRAHQQGKIKQVWVDETRPLLQGGRLTAWELGELGIPYQLICDSMAASLMAQGRVDAVWVGADRIAANGDVANKIGTYSLAVLANYHRIPFYVAAPHTTHDPDCPNGAAIPIEQRDASEVKGVSGGFGHCQWAPANAPVYNPAFDVTPAALISGWVLDSGVITPGQVAAGFFQPKN.

Substrate is bound by residues 54-56 (RGA), arginine 91, and glutamine 192. Residue aspartate 233 is the Proton donor of the active site. 243–244 (NK) contributes to the substrate binding site.

This sequence belongs to the eIF-2B alpha/beta/delta subunits family. MtnA subfamily.

It catalyses the reaction 5-(methylsulfanyl)-alpha-D-ribose 1-phosphate = 5-(methylsulfanyl)-D-ribulose 1-phosphate. It functions in the pathway amino-acid biosynthesis; L-methionine biosynthesis via salvage pathway; L-methionine from S-methyl-5-thio-alpha-D-ribose 1-phosphate: step 1/6. Functionally, catalyzes the interconversion of methylthioribose-1-phosphate (MTR-1-P) into methylthioribulose-1-phosphate (MTRu-1-P). The polypeptide is Methylthioribose-1-phosphate isomerase (Yersinia enterocolitica serotype O:8 / biotype 1B (strain NCTC 13174 / 8081)).